Reading from the N-terminus, the 372-residue chain is N-methyl-L-tryptophan oxidase (372 aa).

4–34 (DLIIIGSGSVGAAAGYYATRAGLKVLMTDAH) contacts FAD. The residue at position 307 (C307) is an S-8alpha-FAD cysteine.

This sequence belongs to the MSOX/MTOX family. MTOX subfamily. In terms of assembly, monomer. Requires FAD as cofactor.

It catalyses the reaction N(alpha)-methyl-L-tryptophan + O2 + H2O = L-tryptophan + formaldehyde + H2O2. Its function is as follows. Catalyzes the oxidative demethylation of N-methyl-L-tryptophan. This is N-methyl-L-tryptophan oxidase from Salmonella dublin (strain CT_02021853).